We begin with the raw amino-acid sequence, 406 residues long: Cholinephosphotransferase 1 (406 aa).

Position 2 is an N-acetylalanine (Ala-2). Residues 2-62 (AAGAGAGSAP…LLQWIPLWMA (61 aa)) are Cytoplasmic-facing. Residues 63–83 (PNSITLLGLAVNVVTTLVLIS) form a helical membrane-spanning segment. Asn-64 provides a ligand contact to CDP-choline. Residues 84–93 (YCPTATEEAP) lie on the Lumenal side of the membrane. A helical transmembrane segment spans residues 94 to 118 (YWTYLLCALGLFIYQSLDAIDGKQA). Asp-111 and Asp-114 together coordinate Mg(2+). Arg-119 serves as a coordination point for CDP-choline. At 119–125 (RRTNSCS) the chain is on the cytoplasmic side. A helical transmembrane segment spans residues 126-150 (PLGELFDHGCDSLSTVFMAVGASIA). Position 132 (Asp-132) interacts with Mg(2+). The active-site Proton acceptor is the His-133. Asp-136 serves as a coordination point for Mg(2+). The Lumenal segment spans residues 151–160 (ARLGTYPDWF). Residues 161 to 179 (FFCSFIGMFVFYCAHWQTY) traverse the membrane as a helical segment. Over 180-190 (VSGMLRFGKVD) the chain is Cytoplasmic. A helical transmembrane segment spans residues 191-207 (VTEIQIALVIVFVLSAF). The Lumenal segment spans residues 208-222 (GGATMWDYTIPILEI). A helical membrane pass occupies residues 223-248 (KLKILPVLGFLGGVIFSCSNYFHVIL). Residues 249–265 (HGGVGKNGSTIAGTSVL) are Cytoplasmic-facing. Residues 266-281 (SPGLHIGLIIILAIMI) form a helical membrane-spanning segment. At 282–293 (YKKSATDVFEKH) the chain is on the lumenal side. The helical transmembrane segment at 294–316 (PCLYILMFGCVFAKVSQKLVVAH) threads the bilayer. At 317 to 329 (MTKSELYLQDTVF) the chain is on the cytoplasmic side. Residues 330–339 (LGPGLLFLDQ) traverse the membrane as a helical segment. At 340 to 346 (YFNNFID) the chain is on the lumenal side. The helical transmembrane segment at 347–376 (EYVVLWMAMVISSFDMVIYFSALCLQISRH) threads the bilayer. The Cytoplasmic portion of the chain corresponds to 377–406 (LHLNIFKTACHQAPEQVQVLSSKSHQNNMD).

Belongs to the CDP-alcohol phosphatidyltransferase class-I family. Mg(2+) is required as a cofactor. It depends on Mn(2+) as a cofactor. As to expression, highly expressed in testis, colon, small intestine, heart, prostate and spleen. Also detected in kidney, skeletal muscle, pancreas, leukocytes, ovary and thymus. Weakly expressed in the brain, placenta and lung. Overexpressed in cancerous breast epithelial cell lines.

The protein resides in the golgi apparatus membrane. The catalysed reaction is CDP-choline + a 1,2-diacyl-sn-glycerol = a 1,2-diacyl-sn-glycero-3-phosphocholine + CMP + H(+). It carries out the reaction 1-octadecanoyl-2-(5Z,8Z,11Z,14Z-eicosatetraenoyl)-sn-glycerol + CDP-choline = 1-octadecanoyl-2-(5Z,8Z,11Z,14Z-eicosatetraenoyl)-sn-glycero-3-phosphocholine + CMP + H(+). The enzyme catalyses 1-hexadecanoyl-2-(9Z-octadecenoyl)-sn-glycerol + CDP-choline = 1-hexadecanoyl-2-(9Z-octadecenoyl)-sn-glycero-3-phosphocholine + CMP + H(+). It catalyses the reaction 1-hexadecanoyl-2-(4Z,7Z,10Z,13Z,16Z,19Z-docosahexaenoyl)-sn-glycerol + CDP-choline = 1-hexadecanoyl-2-(4Z,7Z,10Z,13Z,16Z,19Z-docosahexaenoyl)-sn-glycero-3-phosphocholine + CMP + H(+). The catalysed reaction is 1,2-dioctanoyl-sn-glycerol + CDP-choline = 1,2-dioctanoyl-sn-glycero-3-phosphocholine + CMP + H(+). Its pathway is phospholipid metabolism; phosphatidylcholine biosynthesis; phosphatidylcholine from phosphocholine: step 2/2. Catalyzes the final step of de novo phosphatidylcholine (PC) synthesis, i.e. the transfer of choline phosphate from CDP-choline to the free hydroxyl of a diacylglycerol (DAG), producing a PC. It thereby plays a central role in the formation and maintenance of vesicular membranes. This chain is Cholinephosphotransferase 1, found in Homo sapiens (Human).